Consider the following 67-residue polypeptide: ATP synthase F(0) complex subunit 8 (67 aa).

The chain crosses the membrane as a helical span at residues 8–24 (TWSITIMSMIMTLFIVF). At K54 the chain carries N6-acetyllysine; alternate. Position 54 is an N6-succinyllysine; alternate (K54). Position 57 is an N6-acetyllysine (K57).

This sequence belongs to the ATPase protein 8 family. Component of the ATP synthase complex composed at least of ATP5F1A/subunit alpha, ATP5F1B/subunit beta, ATP5MC1/subunit c (homooctomer), MT-ATP6/subunit a, MT-ATP8/subunit 8, ATP5ME/subunit e, ATP5MF/subunit f, ATP5MG/subunit g, ATP5MK/subunit k, ATP5MJ/subunit j, ATP5F1C/subunit gamma, ATP5F1D/subunit delta, ATP5F1E/subunit epsilon, ATP5PF/subunit F6, ATP5PB/subunit b, ATP5PD/subunit d, ATP5PO/subunit OSCP. ATP synthase complex consists of a soluble F(1) head domain (subunits alpha(3) and beta(3)) - the catalytic core - and a membrane F(0) domain - the membrane proton channel (subunits c, a, 8, e, f, g, k and j). These two domains are linked by a central stalk (subunits gamma, delta, and epsilon) rotating inside the F1 region and a stationary peripheral stalk (subunits F6, b, d, and OSCP). Interacts with PRICKLE3.

The protein resides in the mitochondrion membrane. In terms of biological role, subunit 8, of the mitochondrial membrane ATP synthase complex (F(1)F(0) ATP synthase or Complex V) that produces ATP from ADP in the presence of a proton gradient across the membrane which is generated by electron transport complexes of the respiratory chain. ATP synthase complex consist of a soluble F(1) head domain - the catalytic core - and a membrane F(1) domain - the membrane proton channel. These two domains are linked by a central stalk rotating inside the F(1) region and a stationary peripheral stalk. During catalysis, ATP synthesis in the catalytic domain of F(1) is coupled via a rotary mechanism of the central stalk subunits to proton translocation. In vivo, can only synthesize ATP although its ATP hydrolase activity can be activated artificially in vitro. Part of the complex F(0) domain. The protein is ATP synthase F(0) complex subunit 8 of Felis catus (Cat).